The following is a 121-amino-acid chain: Large ribosomal subunit protein bL20 (121 aa).

Belongs to the bacterial ribosomal protein bL20 family.

Functionally, binds directly to 23S ribosomal RNA and is necessary for the in vitro assembly process of the 50S ribosomal subunit. It is not involved in the protein synthesizing functions of that subunit. In Persephonella marina (strain DSM 14350 / EX-H1), this protein is Large ribosomal subunit protein bL20.